The following is a 334-amino-acid chain: Beta-ketoacyl-[acyl-carrier-protein] synthase III (334 aa).

Catalysis depends on residues Cys114 and His260. The tract at residues 261–265 is ACP-binding; the sequence is QANLR. Residue Asn290 is part of the active site.

It belongs to the thiolase-like superfamily. FabH family. As to quaternary structure, homodimer.

Its subcellular location is the cytoplasm. The enzyme catalyses malonyl-[ACP] + acetyl-CoA + H(+) = 3-oxobutanoyl-[ACP] + CO2 + CoA. Its pathway is lipid metabolism; fatty acid biosynthesis. Functionally, catalyzes the condensation reaction of fatty acid synthesis by the addition to an acyl acceptor of two carbons from malonyl-ACP. Catalyzes the first condensation reaction which initiates fatty acid synthesis and may therefore play a role in governing the total rate of fatty acid production. Possesses both acetoacetyl-ACP synthase and acetyl transacylase activities. Its substrate specificity determines the biosynthesis of branched-chain and/or straight-chain of fatty acids. The sequence is that of Beta-ketoacyl-[acyl-carrier-protein] synthase III from Clostridium tetani (strain Massachusetts / E88).